Here is a 250-residue protein sequence, read N- to C-terminus: 2,3-bisphosphoglycerate-dependent phosphoglycerate mutase (250 aa).

Substrate is bound by residues arginine 8–asparagine 15, threonine 21–glycine 22, arginine 60, glutamate 87–tyrosine 90, lysine 98, arginine 114–arginine 115, and glycine 183–asparagine 184. Catalysis depends on histidine 9, which acts as the Tele-phosphohistidine intermediate. Glutamate 87 functions as the Proton donor/acceptor in the catalytic mechanism.

The protein belongs to the phosphoglycerate mutase family. BPG-dependent PGAM subfamily.

The catalysed reaction is (2R)-2-phosphoglycerate = (2R)-3-phosphoglycerate. It participates in carbohydrate degradation; glycolysis; pyruvate from D-glyceraldehyde 3-phosphate: step 3/5. In terms of biological role, catalyzes the interconversion of 2-phosphoglycerate and 3-phosphoglycerate. This Borrelia duttonii (strain Ly) protein is 2,3-bisphosphoglycerate-dependent phosphoglycerate mutase.